The chain runs to 338 residues: D-erythrose-4-phosphate dehydrogenase (338 aa).

12-13 serves as a coordination point for NAD(+); the sequence is RI. Substrate-binding positions include 154–156, Arg200, 213–214, and Arg236; these read SCT and TK. The active-site Nucleophile is the Cys155. Asn318 contacts NAD(+).

The protein belongs to the glyceraldehyde-3-phosphate dehydrogenase family. Epd subfamily. In terms of assembly, homotetramer.

It is found in the cytoplasm. The enzyme catalyses D-erythrose 4-phosphate + NAD(+) + H2O = 4-phospho-D-erythronate + NADH + 2 H(+). It participates in cofactor biosynthesis; pyridoxine 5'-phosphate biosynthesis; pyridoxine 5'-phosphate from D-erythrose 4-phosphate: step 1/5. Its function is as follows. Catalyzes the NAD-dependent conversion of D-erythrose 4-phosphate to 4-phosphoerythronate. This chain is D-erythrose-4-phosphate dehydrogenase, found in Yersinia enterocolitica serotype O:8 / biotype 1B (strain NCTC 13174 / 8081).